Here is a 481-residue protein sequence, read N- to C-terminus: MAAQVVTVGESKDLRGLNLIAAHSHIRGLGVDADTLEPRVASQGLVGQEKARKAAAVVLEMIKQGKIAGRAVLIAGPPSTGKTALAMGMAQSLGTDVPFTTLAASEIYSLEMSKTEALTQAFRKSIGVRIKEESEIMEGEVVEIQIDRSVTGHAKQGKLTIKTTDMEAIYDMGSKMIDAMTKERVMAGDIISIDKSSGKITKLGRSYARSRDYDAMGVDTKFLQCPDGELQKRKEVVHTVTLHEIDVINSRTQGFLALFSGDTGEIRSEIRDQINTKVAEWKEEGKAEIVPGVLFIDEVHMLDIECFSYINRALESDLAPIVIMASNRGHSKIRGTDYKSPHGLPLDFLDRISIINTHSYTPDELRQILTIRAQEEEVDLTPDALALLTKIGAEAGLRYASNLITTSQLICAKRKAKQVGVEDVQRSFKLFYDPARSVKFVQESEKRLIGSDGVVDFRVNGGATGEPAATAAGGDSMDTSS.

Position 76–83 (76–83 (GPPSTGKT)) interacts with ATP.

The protein belongs to the RuvB family. As to quaternary structure, may form heterododecamers with hel-1/rvb1. Component of the SWR1 chromatin remodeling complex, the INO80 chromatin remodeling complex, and of the R2TP complex.

It is found in the nucleus. It catalyses the reaction ATP + H2O = ADP + phosphate + H(+). In terms of biological role, DNA helicase which participates in several chromatin remodeling complexes, including the SWR1 and the INO80 complexes. The SWR1 complex mediates the ATP-dependent exchange of histone H2A for the H2A variant H2A.Z leading to transcriptional regulation of selected genes by chromatin remodeling. The INO80 complex remodels chromatin by shifting nucleosomes and is involved in DNA repair. Also involved in pre-rRNA processing. This is RuvB-like helicase 2 (hel-2) from Neurospora crassa (strain ATCC 24698 / 74-OR23-1A / CBS 708.71 / DSM 1257 / FGSC 987).